Consider the following 561-residue polypeptide: Type 2 DNA topoisomerase 6 subunit B (561 aa).

ATP is bound by residues Asn-46, Asp-78, 99-100 (TK), 109-116 (GQQGIGIS), and Lys-471.

The protein belongs to the TOP6B family. Homodimer. Heterotetramer of two Top6A and two Top6B chains.

It catalyses the reaction ATP-dependent breakage, passage and rejoining of double-stranded DNA.. Relaxes both positive and negative superturns and exhibits a strong decatenase activity. The polypeptide is Type 2 DNA topoisomerase 6 subunit B (Thermococcus gammatolerans (strain DSM 15229 / JCM 11827 / EJ3)).